We begin with the raw amino-acid sequence, 202 residues long: UPF0301 protein ML0028 (202 aa).

Belongs to the UPF0301 (AlgH) family.

In Mycobacterium leprae (strain TN), this protein is UPF0301 protein ML0028.